We begin with the raw amino-acid sequence, 426 residues long: GTPase Obg (426 aa).

In terms of domain architecture, Obg spans 1–158; sequence MFVDEVEIKV…RSIRLELKLV (158 aa). Residues 159-330 enclose the OBG-type G domain; the sequence is ADVGLIGFPN…LIYYTGDLLK (172 aa). GTP-binding positions include 165 to 172, 190 to 194, 212 to 215, 282 to 285, and 311 to 313; these read GFPNVGKS, FTTLK, DIPG, NKID, and SAA. Mg(2+) is bound by residues S172 and T192. Residues 349 to 426 enclose the OCT domain; sequence DFADEEENIV…IGPMEFEYME (78 aa).

Belongs to the TRAFAC class OBG-HflX-like GTPase superfamily. OBG GTPase family. As to quaternary structure, monomer. Requires Mg(2+) as cofactor.

It localises to the cytoplasm. Its function is as follows. An essential GTPase which binds GTP, GDP and possibly (p)ppGpp with moderate affinity, with high nucleotide exchange rates and a fairly low GTP hydrolysis rate. Plays a role in control of the cell cycle, stress response, ribosome biogenesis and in those bacteria that undergo differentiation, in morphogenesis control. This Halothermothrix orenii (strain H 168 / OCM 544 / DSM 9562) protein is GTPase Obg.